Here is a 395-residue protein sequence, read N- to C-terminus: S-adenosylmethionine synthase (395 aa).

An ATP-binding site is contributed by His14. Mg(2+) is bound at residue Asp16. Glu42 contributes to the K(+) binding site. L-methionine contacts are provided by Glu55 and Gln98. The segment at 98–108 (QSPDIAMGVNK) is flexible loop. ATP-binding positions include 174–176 (DGK), 240–241 (RF), Asp249, 255–256 (RK), Ala272, and Lys276. An L-methionine-binding site is contributed by Asp249. Position 280 (Lys280) interacts with L-methionine.

Belongs to the AdoMet synthase family. Homotetramer; dimer of dimers. Mg(2+) serves as cofactor. It depends on K(+) as a cofactor.

The protein localises to the cytoplasm. It carries out the reaction L-methionine + ATP + H2O = S-adenosyl-L-methionine + phosphate + diphosphate. The protein operates within amino-acid biosynthesis; S-adenosyl-L-methionine biosynthesis; S-adenosyl-L-methionine from L-methionine: step 1/1. In terms of biological role, catalyzes the formation of S-adenosylmethionine (AdoMet) from methionine and ATP. The overall synthetic reaction is composed of two sequential steps, AdoMet formation and the subsequent tripolyphosphate hydrolysis which occurs prior to release of AdoMet from the enzyme. The polypeptide is S-adenosylmethionine synthase (Caldanaerobacter subterraneus subsp. tengcongensis (strain DSM 15242 / JCM 11007 / NBRC 100824 / MB4) (Thermoanaerobacter tengcongensis)).